A 1826-amino-acid chain; its full sequence is Transcription initiation factor TFIID subunit 1-like (1826 aa).

3 disordered regions span residues 118-141 (DESQ…YDED), 532-555 (IPDE…SSLK), and 1252-1276 (RLKR…MKER). Basic and acidic residues predominate over residues 1252-1268 (RLKRNQEKEKLKGPPEK). A Nuclear localization signal motif is present at residues 1370–1377 (PPKKKRRV). Bromo domains follow at residues 1395–1503 (RRRT…LKEK) and 1517–1626 (LLDD…ITEY). Positions 1648–1826 (AELESLDPMT…SGEHKDGHGK (179 aa)) are disordered. The segment covering 1660-1700 (PYTSQPPDMYDTNTSLSTSRDASVFQDESNLSVLDISTATP) has biased composition (polar residues). 3 stretches are compositionally biased toward acidic residues: residues 1714–1729 (EDSD…EEED), 1740–1750 (GDGDLADEEEG), and 1768–1783 (EGED…EEGD). Positions 1787–1797 (SAIQLSESGSD) are enriched in polar residues. The span at 1817–1826 (SGEHKDGHGK) shows a compositional bias: basic and acidic residues.

It belongs to the TAF1 family. In terms of assembly, can bind directly to TATA-box binding protein (TBP). Interacts (via bromo domains) with acetylated lysine residues on the N-terminus of histone H1.4, H2A, H2B, H3 and H4 (in vitro). Testis specific, expressed apparently in germ cells.

Its subcellular location is the nucleus. May act as a functional substitute for TAF1/TAFII250 during male meiosis, when sex chromosomes are transcriptionally silenced. The sequence is that of Transcription initiation factor TFIID subunit 1-like (TAF1L) from Homo sapiens (Human).